Here is a 399-residue protein sequence, read N- to C-terminus: MNIKTLTVSEVTNYIKRMLDNDFILSNLSVKGEISNLKYHSSGHIYFTLKDSSGRINCVMFKSNAVLLDFPLEEGMEVIIKGRASIYPATGSFQLYCDEIRKEGLGDLFIKFEKLKEKLSKEGYFDEAYKKELPKYPQRIGIVTSPTGAAIRDIINVSTRRSSLVDVVLYPAKVQGSGAYKDIISGINYFNRKKSVDIIIVGRGGGSIEELWNFNEEELAKAIFNSKIPIISAVGHEIDFTICDFVADVRAATPSQGAEIAVPLSDNIKDRLLDISKNLDKYISDRLDTCRNNLSGAQRILKVHSPMAKISNSYLEVDRLQDRLNFAMRTKIKGEKNKVENLNNLLFAHNPIKVISKGYAIIKDNENNIITSKEQLNEDKNIEVILKDGNIEGKFIPSK.

The protein belongs to the XseA family. As to quaternary structure, heterooligomer composed of large and small subunits.

Its subcellular location is the cytoplasm. The catalysed reaction is Exonucleolytic cleavage in either 5'- to 3'- or 3'- to 5'-direction to yield nucleoside 5'-phosphates.. In terms of biological role, bidirectionally degrades single-stranded DNA into large acid-insoluble oligonucleotides, which are then degraded further into small acid-soluble oligonucleotides. This chain is Exodeoxyribonuclease 7 large subunit, found in Clostridium beijerinckii (strain ATCC 51743 / NCIMB 8052) (Clostridium acetobutylicum).